We begin with the raw amino-acid sequence, 378 residues long: Cyclic di-GMP phosphodiesterase response regulator RpfG (378 aa).

One can recognise a Response regulatory domain in the interval 29 to 147; the sequence is NIVIVDDQMS…ELRARCSNLL (119 aa). Residue D80 is modified to 4-aspartylphosphate. The HD-GYP domain occupies 174–371; it reads VEERERETLS…LEQICGQFST (198 aa).

As to quaternary structure, interacts with a subset of GGDEF domain-containing proteins. Phosphorylated and activated by RpfC.

It is found in the cytoplasm. It catalyses the reaction 3',3'-c-di-GMP + 2 H2O = 2 GMP + 2 H(+). In terms of biological role, member of the two-component regulatory system RpfG/RpfC, which is involved in the perception and response to the diffusible signaling factor (DSF), which is essential for cell-cell signaling. Detection of DSF leads to the positive regulation of biofilm dispersal and the production of virulence factors. Activated RpfG degrades cyclic di-GMP to GMP, leading to the activation of Clp, a global transcriptional regulator that regulates a large set of genes in DSF pathway. May also directly control genes involved in biofilm dispersal. The chain is Cyclic di-GMP phosphodiesterase response regulator RpfG (rpfG) from Xanthomonas campestris pv. campestris (strain 8004).